A 37-amino-acid polypeptide reads, in one-letter code: MVEPLLSGIVLGLIVVTLAGLFYAAYKQYKRPNELGG.

Residues 5-25 form a helical membrane-spanning segment; sequence LLSGIVLGLIVVTLAGLFYAA.

This sequence belongs to the PetG family. As to quaternary structure, the 4 large subunits of the cytochrome b6-f complex are cytochrome b6, subunit IV (17 kDa polypeptide, PetD), cytochrome f and the Rieske protein, while the 4 small subunits are PetG, PetL, PetM and PetN. The complex functions as a dimer.

Its subcellular location is the cellular thylakoid membrane. In terms of biological role, component of the cytochrome b6-f complex, which mediates electron transfer between photosystem II (PSII) and photosystem I (PSI), cyclic electron flow around PSI, and state transitions. PetG is required for either the stability or assembly of the cytochrome b6-f complex. The sequence is that of Cytochrome b6-f complex subunit 5 from Anabaena variabilis.